Here is a 238-residue protein sequence, read N- to C-terminus: Probable amino-acid ABC transporter permease protein y4tF (238 aa).

Positions 29-223 (AWVTIQFTLY…GIALVLSFFM (195 aa)) constitute an ABC transmembrane type-1 domain. The next 5 helical transmembrane spans lie at 33–53 (IQFTLYSMFFGAVCSFAFGIG), 77–97 (LLVQLFWLFFALPIAGDMMGI), 103–123 (PVVAGVLALSLNLGAYGAEIV), 152–172 (VALPQAIPEMMPSFSNLAIAA), and 203–223 (TVYTMVLLMYFGIALVLSFFM).

This sequence belongs to the binding-protein-dependent transport system permease family. HisMQ subfamily.

Its subcellular location is the cell inner membrane. Functionally, probably part of the binding-protein-dependent transport system y4tEFGH for an amino acid. Probably responsible for the translocation of the substrate across the membrane. The protein is Probable amino-acid ABC transporter permease protein y4tF of Sinorhizobium fredii (strain NBRC 101917 / NGR234).